We begin with the raw amino-acid sequence, 299 residues long: Peroxisomal biogenesis factor 19 (299 aa).

The disordered stretch occupies residues 1 to 61; the sequence is MAAAEEGCGV…KRAPGDTAKD (61 aa). Ala-2 carries the N-acetylalanine modification. Residues 2–56 form a docking to the peroxisome membrane and binding to PEX3 region; it reads AAAEEGCGVGVEDDRELEELLESALDDFDKAKPSPEHAPTISAPDASGPQKRAPG. Residues 2–91 form a necessary for PEX19 function on peroxisome biogenesis region; it reads AAAEEGCGVG…QATAEFEKAM (90 aa). Positions 12–27 are enriched in acidic residues; sequence VEDDRELEELLESALD. Ser-35 and Ser-66 each carry phosphoserine. At Thr-236 the chain carries Phosphothreonine. At Cys-296 the chain carries Cysteine methyl ester. Cys-296 carries the S-farnesyl cysteine lipid modification. A propeptide spans 297–299 (removed in mature form); the sequence is LIM.

The protein belongs to the peroxin-19 family. As to quaternary structure, interacts with a broad range of peroxisomal membrane proteins, including PEX3, PEX10, PEX11A, PEX11B, PEX12, PEX13, PEX14 and PEX16, PXMP2/PMP22, PXMP4/PMP24, SLC25A17/PMP34, ABCD1/ALDP, ABCD2/ALDRP, and ABCD3/PMP70. Also interacts with the tumor suppressor CDKN2A/p19ARF.

It localises to the cytoplasm. The protein localises to the peroxisome membrane. Its function is as follows. Necessary for early peroxisomal biogenesis. Acts both as a cytosolic chaperone and as an import receptor for peroxisomal membrane proteins (PMPs). Binds and stabilizes newly synthesized PMPs in the cytoplasm by interacting with their hydrophobic membrane-spanning domains, and targets them to the peroxisome membrane by binding to the integral membrane protein PEX3. Excludes CDKN2A from the nucleus and prevents its interaction with MDM2, which results in active degradation of TP53. The polypeptide is Peroxisomal biogenesis factor 19 (Pex19) (Mus musculus (Mouse)).